The sequence spans 93 residues: Serine rich endogenous peptide 6 (93 aa).

The first 27 residues, 1–27 (MGTKCYSKLRYVVVLVLLLFVFPCSLS), serve as a signal peptide directing secretion. 2 consecutive short sequence motifs (SCOOP motif) follow at residues 48–62 (GIIAGSSPSGQAPNI) and 73–87 (ISEARPSKSKKGGGR). Residues 52-93 (GSSPSGQAPNINNNYHGRRLMISEARPSKSKKGGGREPESPG) form a disordered region. Residues 53-66 (SSPSGQAPNINNNY) are compositionally biased toward polar residues. Short sequence motifs (sxS motif essential for MIK2 binding) lie at residues 54–56 (SPS) and 79–81 (SKS).

The protein belongs to the serine rich endogenous peptide (SCOOP) phytocytokine family. As to quaternary structure, interacts with MIK2 (via extracellular leucine-rich repeat domain); this interaction triggers the formation of complex between MIK2 and the BAK1/SERK3 and SERK4 coreceptors, and subsequent BAK1 activation by phosphorylation. As to expression, mostly expressed in seedlings shoots, and, to a lower extent, in roots.

It localises to the cell membrane. Its subcellular location is the secreted. The protein localises to the extracellular space. The protein resides in the apoplast. Functionally, brassicaceae-specific phytocytokine (plant endogenous peptide released into the apoplast) perceived by MIK2 in a BAK1/SERK3 and SERK4 coreceptors-dependent manner, that modulates various physiological and antimicrobial processes including growth prevention and reactive oxygen species (ROS) response regulation. Inhibits root growth. This Arabidopsis thaliana (Mouse-ear cress) protein is Serine rich endogenous peptide 6.